The chain runs to 423 residues: Aspartic protease-like protein pytH (423 aa).

An N-terminal signal peptide occupies residues 1–16; it reads MWLSVALLTLLDGALA. A Peptidase A1 domain is found at 38–416; the sequence is TTDAIQIGTP…DFDKLRVGLA (379 aa). The active site involves Asp-56. N-linked (GlcNAc...) asparagine glycans are attached at residues Asn-88, Asn-97, Asn-168, Asn-196, Asn-231, and Asn-279. Residue Asp-291 is part of the active site. Residue Asn-330 is glycosylated (N-linked (GlcNAc...) asparagine). Residues Cys-338 and Cys-377 are joined by a disulfide bond.

Belongs to the peptidase A1 family.

It participates in secondary metabolite biosynthesis. In terms of biological role, aspartic protease-like protein; part of the gene cluster that mediates the biosynthesis of pyranterreones, a family of antioxidative compounds. The first step of pyranonigrins biosynthesis is performed by the hybrid PKS-NRPS synthetase pytA that condenses 4 malonyl-CoA units ato the acetyl starter unit by the modular PKS of pytA. The acyl chain is then connected to an L-serine through the amide bond by the modular NRPS of pytA. A tetramic acid is formed and released from the PKS-NRPS pytA to give pyranterreone 5 with the help of the thioesterase pytI. Pyranterreone 5 could be methylated by pytC to afford pyranterreone 6. Both pyranterreones 5 and 6 are subsequently oxidized by the FAD-linked oxidoreductase pytB and the cytochrome P450 monooxygenase pytD to form the fused gamma-pyrone core, resulting in pyranterreones 7 and 11, respectively. The hydroxy group at C-8 of pyranterreones 7 and 11 are dehydrated by the aspartyl protease pytH to form a delta-7 double bond to give pyranterreones 3 and 1, 2 accordingly. The exo-methylene of pyranterreone 3 could be reduced into a pendant methyl by reductase pytE to provide pyranterreone 4, also known as cordylactam. Pyranterreone 4 can be reconverted to pyranterreone 3 through pytB-catalyzed dehydrogenation or further oxidized to pyranterreones 9 and 10. The chain is Aspartic protease-like protein pytH from Aspergillus terreus (strain NIH 2624 / FGSC A1156).